The chain runs to 186 residues: NADH dehydrogenase [ubiquinone] 1 beta subcomplex subunit 8, mitochondrial (186 aa).

The transit peptide at 1-28 (MAAARAGVLGVRWLQKAARNVVPLGART) directs the protein to the mitochondrion. A helical transmembrane segment spans residues 133-153 (LFGFVAFMLFMFWVGETYPAY).

Belongs to the complex I NDUFB8 subunit family. Complex I is composed of 45 different subunits.

It localises to the mitochondrion inner membrane. Its function is as follows. Accessory subunit of the mitochondrial membrane respiratory chain NADH dehydrogenase (Complex I), that is believed not to be involved in catalysis. Complex I functions in the transfer of electrons from NADH to the respiratory chain. The immediate electron acceptor for the enzyme is believed to be ubiquinone. The polypeptide is NADH dehydrogenase [ubiquinone] 1 beta subcomplex subunit 8, mitochondrial (NDUFB8) (Bos taurus (Bovine)).